We begin with the raw amino-acid sequence, 57 residues long: Protein translocase subunit SecE (57 aa).

The chain crosses the membrane as a helical span at residues 34-54; it reads AGILLIGAIGFLVFLIMGGIV.

It belongs to the SecE/SEC61-gamma family. Component of the Sec protein translocase complex. Heterotrimer consisting of SecY (alpha), SecG (beta) and SecE (gamma) subunits. The heterotrimers can form oligomers, although 1 heterotrimer is thought to be able to translocate proteins. Interacts with the ribosome. May interact with SecDF, and other proteins may be involved.

It is found in the cell membrane. Its function is as follows. Essential subunit of the Sec protein translocation channel SecYEG. Clamps together the 2 halves of SecY. May contact the channel plug during translocation. This is Protein translocase subunit SecE from Halobacterium salinarum (strain ATCC 29341 / DSM 671 / R1).